We begin with the raw amino-acid sequence, 354 residues long: Uroporphyrinogen decarboxylase (354 aa).

Substrate contacts are provided by residues 27–31, D77, Y154, S209, and H327; that span reads RQAGR.

Belongs to the uroporphyrinogen decarboxylase family. In terms of assembly, homodimer.

Its subcellular location is the cytoplasm. It catalyses the reaction uroporphyrinogen III + 4 H(+) = coproporphyrinogen III + 4 CO2. It functions in the pathway porphyrin-containing compound metabolism; protoporphyrin-IX biosynthesis; coproporphyrinogen-III from 5-aminolevulinate: step 4/4. Catalyzes the decarboxylation of four acetate groups of uroporphyrinogen-III to yield coproporphyrinogen-III. This chain is Uroporphyrinogen decarboxylase, found in Shewanella denitrificans (strain OS217 / ATCC BAA-1090 / DSM 15013).